The primary structure comprises 214 residues: MSSMVTPQHAQELSTGARELGIDLSPAQHEQLLAYLALLIKWNKAYNLTAVRNPDEMVSRHLLDSLSVVPFIEGTRWIDVGSGGGMPGIPMAILFPERKVALLDSNGKKTRFQTQVKLELKLDNLEVIHSRAESYQPEVPFDGIISRAFSSLEDFTGWTRHMGDVNTRWLAMKGLHPDDELVALPSDFHLDSAHALTVPGCQGQRHLLILRRTA.

S-adenosyl-L-methionine-binding positions include glycine 81, methionine 86, 132–133 (AE), and arginine 147.

The protein belongs to the methyltransferase superfamily. RNA methyltransferase RsmG family.

The protein localises to the cytoplasm. The catalysed reaction is guanosine(527) in 16S rRNA + S-adenosyl-L-methionine = N(7)-methylguanosine(527) in 16S rRNA + S-adenosyl-L-homocysteine. In terms of biological role, specifically methylates the N7 position of guanine in position 527 of 16S rRNA. This is Ribosomal RNA small subunit methyltransferase G from Pseudomonas syringae pv. syringae (strain B728a).